The chain runs to 265 residues: 5'-nucleotidase SurE (265 aa).

The a divalent metal cation site is built by D12, D13, S43, and N91.

It belongs to the SurE nucleotidase family. Requires a divalent metal cation as cofactor.

The protein resides in the cytoplasm. The enzyme catalyses a ribonucleoside 5'-phosphate + H2O = a ribonucleoside + phosphate. Functionally, nucleotidase that shows phosphatase activity on nucleoside 5'-monophosphates. The sequence is that of 5'-nucleotidase SurE from Haloquadratum walsbyi (strain DSM 16790 / HBSQ001).